We begin with the raw amino-acid sequence, 356 residues long: sn-glycerol-3-phosphate import ATP-binding protein UgpC (356 aa).

The 232-residue stretch at 4-235 folds into the ABC transporter domain; sequence LKLQAVTKSW…PASRFVASFI (232 aa). An ATP-binding site is contributed by 37-44; sequence GPSGCGKS.

Belongs to the ABC transporter superfamily. sn-glycerol-3-phosphate importer (TC 3.A.1.1.3) family. In terms of assembly, the complex is composed of two ATP-binding proteins (UgpC), two transmembrane proteins (UgpA and UgpE) and a solute-binding protein (UgpB).

It localises to the cell inner membrane. The catalysed reaction is sn-glycerol 3-phosphate(out) + ATP + H2O = sn-glycerol 3-phosphate(in) + ADP + phosphate + H(+). Its function is as follows. Part of the ABC transporter complex UgpBAEC involved in sn-glycerol-3-phosphate (G3P) import. Responsible for energy coupling to the transport system. This chain is sn-glycerol-3-phosphate import ATP-binding protein UgpC, found in Salmonella typhimurium (strain LT2 / SGSC1412 / ATCC 700720).